Consider the following 182-residue polypeptide: Large ribosomal subunit protein uL6 (182 aa).

It belongs to the universal ribosomal protein uL6 family. As to quaternary structure, part of the 50S ribosomal subunit.

Functionally, this protein binds to the 23S rRNA, and is important in its secondary structure. It is located near the subunit interface in the base of the L7/L12 stalk, and near the tRNA binding site of the peptidyltransferase center. This chain is Large ribosomal subunit protein uL6, found in Dehalococcoides mccartyi (strain CBDB1).